The sequence spans 1418 residues: Structural maintenance of chromosomes protein 4 (1418 aa).

The tract at residues M1–L122 is disordered. S2 carries the N-acetylserine modification. Polar residues-rich tracts occupy residues E34–T43 and S68–S97. Phosphothreonine is present on T43. The span at S107–S117 shows a compositional bias: low complexity. Position 113 is a phosphoserine (S113). Position 185–192 (G185–S192) interacts with ATP. Residues G345 to L673 are a coiled coil. Residues N686–A799 enclose the SMC hinge domain. 2 coiled-coil regions span residues E849–Y1172 and V1224–R1263.

Belongs to the SMC family. SMC4 subfamily. In terms of assembly, forms a heterodimer with SMC2. Component of the condensin complex, which contains the SMC2 and SMC4 heterodimer, and three non SMC subunits that probably regulate the complex: BRN1, YCS4 and YCG1/YCS5.

Its subcellular location is the nucleus. The protein resides in the cytoplasm. It localises to the chromosome. Functionally, central component of the condensin complex, a complex required for conversion of interphase chromatin into mitotic-like condense chromosomes. The condensin complex probably introduces positive supercoils into relaxed DNA in the presence of type I topoisomerases and converts nicked DNA into positive knotted forms in the presence of type II topoisomerases. In Saccharomyces cerevisiae (strain ATCC 204508 / S288c) (Baker's yeast), this protein is Structural maintenance of chromosomes protein 4 (SMC4).